The sequence spans 331 residues: Protein Brevis radix-like 1 (331 aa).

A disordered region spans residues 1 to 111; the sequence is MFTCINCTKM…HQSGRPDSRF (111 aa). Polar residues-rich tracts occupy residues 25–41 and 48–66; these read STTP…TTQI and FSGS…SSNL. The 56-residue stretch at 137 to 192 folds into the BRX 1 domain; that stretch reads KEWMAQVEPGVHITFVSLPSGGNDLKRIRFSREVFDKWQAQRWWGENYDRIVELYN. Disordered regions lie at residues 201 to 246 and 258 to 279; these read LQTP…VPHH and TTSS…GEWV. The segment covering 221 to 235 has biased composition (basic and acidic residues); the sequence is DSARESRDWTQRDNN. Residues 276-331 enclose the BRX 2 domain; sequence GEWVEEDEPGVYITIRQLPDGTRELRRVRFSRERFGEVHAKTWWEQNRDRIQTQYL.

Belongs to the BRX family. As to quaternary structure, heterodimer with BRXL1. As to expression, expressed in roots.

Its subcellular location is the nucleus. In terms of biological role, may act as a regulator of cell proliferation and elongation in the root. In Arabidopsis thaliana (Mouse-ear cress), this protein is Protein Brevis radix-like 1 (BRXL1).